Consider the following 290-residue polypeptide: MVIQKEKKSCGQVVEEWKEFVWNPRTHQFMGRTGTSWAFILLFYLVFYGFLTAMFTLTMWVMLQTVSDHTPKYQDRLATPGLMIRPKTENLDVIVNVSDTESWDQHVQKLNKFLEPYNDSIQAQKNDVCRPGRYYEQPDNGVLNYPKRACQFNRTQLGNCSGIGDPTHYGYSTGQPCVFIKMNRVINFYAGANQSMNVTCAGKRDEDAENLGNFVMFPANGNIDLMYFPYYGKKFHVNYTQPLVAVKFLNVTPNVEVNVECRINAANIATDDERDKFAGRVAFKLRINKT.

The Cytoplasmic portion of the chain corresponds to 1–39; that stretch reads MVIQKEKKSCGQVVEEWKEFVWNPRTHQFMGRTGTSWAF. Residues 40–67 traverse the membrane as a helical; Signal-anchor for type II membrane protein segment; sequence ILLFYLVFYGFLTAMFTLTMWVMLQTVS. Over 68 to 290 the chain is Extracellular; sequence DHTPKYQDRL…VAFKLRINKT (223 aa). Asn-96 and Asn-118 each carry an N-linked (GlcNAc...) asparagine glycan. A disulfide bridge connects residues Cys-129 and Cys-150. N-linked (GlcNAc...) asparagine glycans are attached at residues Asn-153 and Asn-159. Residues Cys-160 and Cys-177 are joined by a disulfide bond. N-linked (GlcNAc...) asparagine glycosylation is found at Asn-193, Asn-197, and Asn-238. The segment at 193 to 290 is immunoglobulin-like; it reads NQSMNVTCAG…VAFKLRINKT (98 aa). Cys-200 and Cys-261 are oxidised to a cystine.

It belongs to the X(+)/potassium ATPases subunit beta family. The sodium/potassium-transporting ATPase is composed of a catalytic alpha subunit, an auxiliary non-catalytic beta subunit and an additional regulatory subunit. Interacts with BSG.

It is found in the cell membrane. This is the non-catalytic component of the active enzyme, which catalyzes the hydrolysis of ATP coupled with the exchange of Na(+) and K(+) ions across the plasma membrane. The exact function of the beta-2 subunit is not known. Functionally, mediates cell adhesion of neurons and astrocytes, and promotes neurite outgrowth. In Ochotona curzoniae (Black-lipped pika), this protein is Sodium/potassium-transporting ATPase subunit beta-2 (ATP1B2).